The following is a 334-amino-acid chain: Replication factor C subunit 4 (334 aa).

55–62 (GPPGTGKT) contributes to the ATP binding site.

The protein belongs to the activator 1 small subunits family. In terms of assembly, heteropentamer of various rfc subunits that forms a complex (RFC) with PCNA in the presence of ATP.

The protein resides in the nucleus. Its function is as follows. The elongation of primed DNA templates by DNA polymerase delta and epsilon requires the action of the accessory proteins PCNA and activator 1. This subunit may be involved in the elongation of the multiprimed DNA template. This chain is Replication factor C subunit 4 (rfc-4), found in Caenorhabditis elegans.